The following is a 1403-amino-acid chain: DNA-directed RNA polymerase subunit beta' (1403 aa).

Residues Cys69, Cys71, Cys84, and Cys87 each contribute to the Zn(2+) site. 3 residues coordinate Mg(2+): Asp461, Asp463, and Asp465. Positions 818, 891, 898, and 901 each coordinate Zn(2+). Residues Leu1384–Glu1403 form a disordered region. Positions Gly1391 to Glu1403 are enriched in acidic residues.

The protein belongs to the RNA polymerase beta' chain family. As to quaternary structure, the RNAP catalytic core consists of 2 alpha, 1 beta, 1 beta' and 1 omega subunit. When a sigma factor is associated with the core the holoenzyme is formed, which can initiate transcription. Requires Mg(2+) as cofactor. It depends on Zn(2+) as a cofactor.

The enzyme catalyses RNA(n) + a ribonucleoside 5'-triphosphate = RNA(n+1) + diphosphate. Functionally, DNA-dependent RNA polymerase catalyzes the transcription of DNA into RNA using the four ribonucleoside triphosphates as substrates. This chain is DNA-directed RNA polymerase subunit beta', found in Koribacter versatilis (strain Ellin345).